Here is a 60-residue protein sequence, read N- to C-terminus: Large ribosomal subunit protein bL32 (60 aa).

Residues 1–46 (MAVQQNKKSPSKRGMHRSHNALNTPGTAIEPTTGEVHLRHHISPTG) form a disordered region. The span at 9–19 (SPSKRGMHRSH) shows a compositional bias: basic residues.

This sequence belongs to the bacterial ribosomal protein bL32 family.

This chain is Large ribosomal subunit protein bL32, found in Leptothrix cholodnii (strain ATCC 51168 / LMG 8142 / SP-6) (Leptothrix discophora (strain SP-6)).